Consider the following 324-residue polypeptide: Clavaminate synthase 1 (324 aa).

The Fe cation site is built by His-144, Glu-146, and His-279. Arg-293 contacts 2-oxoglutarate.

This sequence belongs to the clavaminate synthase family. It depends on Fe(2+) as a cofactor.

It catalyses the reaction deoxyamidinoproclavaminate + 2-oxoglutarate + O2 = amidinoproclavaminate + succinate + CO2. The enzyme catalyses proclavaminate + 2-oxoglutarate + O2 = dihydroclavaminate + succinate + CO2 + H2O. It carries out the reaction dihydroclavaminate + 2-oxoglutarate + O2 = clavaminate + succinate + CO2 + H2O. It participates in antibiotic biosynthesis; clavulanate biosynthesis; clavulanate from D-glyceraldehyde 3-phosphate and L-arginine: step 3/8. Its pathway is antibiotic biosynthesis; clavulanate biosynthesis; clavulanate from D-glyceraldehyde 3-phosphate and L-arginine: step 5/8. The protein operates within antibiotic biosynthesis; clavulanate biosynthesis; clavulanate from D-glyceraldehyde 3-phosphate and L-arginine: step 6/8. In Streptomyces clavuligerus, this protein is Clavaminate synthase 1 (cs1).